The following is a 196-amino-acid chain: Pro-FMRFamide-related neuropeptide VF (196 aa).

The first 26 residues, M1–C26, serve as a signal peptide directing secretion. Positions A27 to R55 are excised as a propeptide. Phenylalanine amide is present on F92. 2 propeptides span residues N95–E99 and N115–V121. F131 bears the Phenylalanine amide mark. Positions T134–K196 are excised as a propeptide.

The protein belongs to the FARP (FMRFamide related peptide) family. In terms of tissue distribution, specifically expressed in the retina. As to expression, detected in the hypothalamus.

It localises to the secreted. Its function is as follows. Efficiently inhibits forskolin-induced production of cAMP. Acts as a potent negative regulator of gonadotropin synthesis and secretion. Induces secretion of prolactin. Efficiently inhibits forskolin-induced production of cAMP. Blocks morphine-induced analgesia. In terms of biological role, shows no inhibitory activity of forskolin-induced production of cAMP. This chain is Pro-FMRFamide-related neuropeptide VF, found in Homo sapiens (Human).